The sequence spans 251 residues: Imidazole glycerol phosphate synthase subunit HisF (251 aa).

Catalysis depends on residues Asp11 and Asp130.

This sequence belongs to the HisA/HisF family. Heterodimer of HisH and HisF.

It localises to the cytoplasm. It carries out the reaction 5-[(5-phospho-1-deoxy-D-ribulos-1-ylimino)methylamino]-1-(5-phospho-beta-D-ribosyl)imidazole-4-carboxamide + L-glutamine = D-erythro-1-(imidazol-4-yl)glycerol 3-phosphate + 5-amino-1-(5-phospho-beta-D-ribosyl)imidazole-4-carboxamide + L-glutamate + H(+). The protein operates within amino-acid biosynthesis; L-histidine biosynthesis; L-histidine from 5-phospho-alpha-D-ribose 1-diphosphate: step 5/9. IGPS catalyzes the conversion of PRFAR and glutamine to IGP, AICAR and glutamate. The HisF subunit catalyzes the cyclization activity that produces IGP and AICAR from PRFAR using the ammonia provided by the HisH subunit. In Listeria monocytogenes serotype 4b (strain CLIP80459), this protein is Imidazole glycerol phosphate synthase subunit HisF.